The following is a 130-amino-acid chain: MVRISVLNDALKSMFNAEKRGKRQVMIRPSSKVIIKFLIVMQKHGYIGEFEYVDDHRSGKIVVELNGRLNKCGVISPRFDVGVKEIEGWTARLLPSRQFGYIVLTTSAGIMDHEEARRKNVGGKVLGFFY.

This sequence belongs to the universal ribosomal protein uS8 family.

The protein resides in the cytoplasm. This chain is Small ribosomal subunit protein uS8 (RPS15A), found in Brassica napus (Rape).